The chain runs to 1164 residues: DNA-directed RNA polymerase 133 kDa polypeptide (1164 aa).

It belongs to the RNA polymerase beta chain family. In terms of assembly, the DNA-dependent RNA polymerase used for intermediate and late genes expression consists of eight subunits 147 kDa, 133 kDa, 35 kDa, 30 kDa, 22 kDa, 19 kDa, 18 kDa and 7 kDa totalling more than 500 kDa in mass. The same holoenzyme, with the addition of the transcription-specificity factor RAP94, is used for early gene expression.

It is found in the virion. The catalysed reaction is RNA(n) + a ribonucleoside 5'-triphosphate = RNA(n+1) + diphosphate. In terms of biological role, part of the DNA-dependent RNA polymerase which catalyzes the transcription of viral DNA into RNA using the four ribonucleoside triphosphates as substrates. Responsible for the transcription of early, intermediate and late genes. DNA-dependent RNA polymerase associates with the early transcription factor (ETF), itself composed of D6 and A7, thereby allowing the early genes transcription. Late transcription, and probably also intermediate transcription, require newly synthesized RNA polymerase. The chain is DNA-directed RNA polymerase 133 kDa polypeptide (RPO132) from Homo sapiens (Human).